Consider the following 120-residue polypeptide: Large ribosomal subunit protein uL22 (120 aa).

Residues 1–20 (MFVNRRYTARGKNLPSSPKK) are disordered.

This sequence belongs to the universal ribosomal protein uL22 family. As to quaternary structure, part of the 50S ribosomal subunit.

Its function is as follows. This protein binds specifically to 23S rRNA; its binding is stimulated by other ribosomal proteins, e.g. L4, L17, and L20. It is important during the early stages of 50S assembly. It makes multiple contacts with different domains of the 23S rRNA in the assembled 50S subunit and ribosome. Functionally, the globular domain of the protein is located near the polypeptide exit tunnel on the outside of the subunit, while an extended beta-hairpin is found that lines the wall of the exit tunnel in the center of the 70S ribosome. This is Large ribosomal subunit protein uL22 from Borrelia hermsii (strain HS1 / DAH).